Consider the following 336-residue polypeptide: Dihydroorotate dehydrogenase (quinone) (336 aa).

Residues 62-66 (AGLDK) and threonine 86 contribute to the FMN site. Residue lysine 66 participates in substrate binding. 111-115 (NRMGF) provides a ligand contact to substrate. Positions 139 and 172 each coordinate FMN. Residue asparagine 172 participates in substrate binding. The Nucleophile role is filled by serine 175. Substrate is bound at residue asparagine 177. Residues lysine 217 and threonine 245 each contribute to the FMN site. 246–247 (NT) is a binding site for substrate. FMN is bound by residues glycine 268, glycine 297, and 318 to 319 (YS).

Belongs to the dihydroorotate dehydrogenase family. Type 2 subfamily. Monomer. Requires FMN as cofactor.

The protein localises to the cell membrane. It carries out the reaction (S)-dihydroorotate + a quinone = orotate + a quinol. The protein operates within pyrimidine metabolism; UMP biosynthesis via de novo pathway; orotate from (S)-dihydroorotate (quinone route): step 1/1. Its function is as follows. Catalyzes the conversion of dihydroorotate to orotate with quinone as electron acceptor. The protein is Dihydroorotate dehydrogenase (quinone) of Salmonella gallinarum (strain 287/91 / NCTC 13346).